The primary structure comprises 693 residues: Elongation factor G (693 aa).

The 275-residue stretch at 8 to 282 folds into the tr-type G domain; that stretch reads EKTRNIGIMA…AVIDYLPSPL (275 aa). GTP contacts are provided by residues 17-24, 81-85, and 135-138; these read AHVDAGKT, DTPGH, and NKMD.

This sequence belongs to the TRAFAC class translation factor GTPase superfamily. Classic translation factor GTPase family. EF-G/EF-2 subfamily.

Its subcellular location is the cytoplasm. Catalyzes the GTP-dependent ribosomal translocation step during translation elongation. During this step, the ribosome changes from the pre-translocational (PRE) to the post-translocational (POST) state as the newly formed A-site-bound peptidyl-tRNA and P-site-bound deacylated tRNA move to the P and E sites, respectively. Catalyzes the coordinated movement of the two tRNA molecules, the mRNA and conformational changes in the ribosome. The protein is Elongation factor G of Streptococcus suis (strain 05ZYH33).